The following is a 205-amino-acid chain: Urease accessory protein UreG (205 aa).

Residue 12–19 (GPVGSGKT) participates in GTP binding.

This sequence belongs to the SIMIBI class G3E GTPase family. UreG subfamily. In terms of assembly, homodimer. UreD, UreF and UreG form a complex that acts as a GTP-hydrolysis-dependent molecular chaperone, activating the urease apoprotein by helping to assemble the nickel containing metallocenter of UreC. The UreE protein probably delivers the nickel.

The protein resides in the cytoplasm. Facilitates the functional incorporation of the urease nickel metallocenter. This process requires GTP hydrolysis, probably effectuated by UreG. The chain is Urease accessory protein UreG from Pseudomonas savastanoi pv. phaseolicola (strain 1448A / Race 6) (Pseudomonas syringae pv. phaseolicola (strain 1448A / Race 6)).